Consider the following 258-residue polypeptide: Ribosomal RNA small subunit methyltransferase A (258 aa).

Residues His-13, Leu-15, Gly-40, Glu-61, Asp-85, and Asn-106 each contribute to the S-adenosyl-L-methionine site.

Belongs to the class I-like SAM-binding methyltransferase superfamily. rRNA adenine N(6)-methyltransferase family. RsmA subfamily.

It localises to the cytoplasm. It catalyses the reaction adenosine(1518)/adenosine(1519) in 16S rRNA + 4 S-adenosyl-L-methionine = N(6)-dimethyladenosine(1518)/N(6)-dimethyladenosine(1519) in 16S rRNA + 4 S-adenosyl-L-homocysteine + 4 H(+). Specifically dimethylates two adjacent adenosines (A1518 and A1519) in the loop of a conserved hairpin near the 3'-end of 16S rRNA in the 30S particle. May play a critical role in biogenesis of 30S subunits. In Porphyromonas gingivalis (strain ATCC 33277 / DSM 20709 / CIP 103683 / JCM 12257 / NCTC 11834 / 2561), this protein is Ribosomal RNA small subunit methyltransferase A.